The primary structure comprises 205 residues: Large ribosomal subunit protein bL25 (205 aa).

Belongs to the bacterial ribosomal protein bL25 family. CTC subfamily. In terms of assembly, part of the 50S ribosomal subunit; part of the 5S rRNA/L5/L18/L25 subcomplex. Contacts the 5S rRNA. Binds to the 5S rRNA independently of L5 and L18.

This is one of the proteins that binds to the 5S RNA in the ribosome where it forms part of the central protuberance. This chain is Large ribosomal subunit protein bL25, found in Bartonella bacilliformis (strain ATCC 35685 / KC583 / Herrer 020/F12,63).